A 224-amino-acid chain; its full sequence is Viral late gene transcription factor 3 (224 aa).

The segment at 6–26 (CSGCRHNGIVSEQGYEYCIFC) is a zinc-finger region.

It belongs to the orthopoxvirus VLTF-3/OPG127 family. As to quaternary structure, interacts with the late transcription elongation factor VLTF-4/OPG110. Interacts with the late transcription factors VLTF-1/OPG093.

Functionally, acts with RNA polymerase to initiate transcription from late gene promoters. The protein is Viral late gene transcription factor 3 (OPG127) of Vaccinia virus (strain Ankara) (VACV).